Here is a 385-residue protein sequence, read N- to C-terminus: Leucine aminopeptidase 1 (385 aa).

An N-terminal signal peptide occupies residues 1–19 (MKFPSFLSLGIAASTTALA). Residues 20-87 (ALPDQKPIGD…FPRAFAKTAV (68 aa)) constitute a propeptide that is removed on maturation. An N-linked (GlcNAc...) asparagine glycan is attached at asparagine 177. Zn(2+) is bound by residues histidine 185 and aspartate 204. Residue asparagine 229 is glycosylated (N-linked (GlcNAc...) asparagine). Residues glutamate 243 and aspartate 270 each coordinate Zn(2+). A disulfide bridge connects residues cysteine 319 and cysteine 323. Residue histidine 352 coordinates Zn(2+).

The protein belongs to the peptidase M28 family. M28E subfamily. In terms of assembly, monomer. Zn(2+) serves as cofactor.

It is found in the secreted. Functionally, extracellular aminopeptidase that allows assimilation of proteinaceous substrates. The sequence is that of Leucine aminopeptidase 1 (LAP1) from Ajellomyces dermatitidis (strain ER-3 / ATCC MYA-2586) (Blastomyces dermatitidis).